The following is a 424-amino-acid chain: Serine--tRNA ligase (424 aa).

L-serine is bound at residue 232–234 (TAE). ATP is bound at residue 263 to 265 (RQE). Position 286 (glutamate 286) interacts with L-serine. 350 to 353 (EIGS) contributes to the ATP binding site. An L-serine-binding site is contributed by serine 386.

Belongs to the class-II aminoacyl-tRNA synthetase family. Type-1 seryl-tRNA synthetase subfamily. In terms of assembly, homodimer. The tRNA molecule binds across the dimer.

It localises to the cytoplasm. It catalyses the reaction tRNA(Ser) + L-serine + ATP = L-seryl-tRNA(Ser) + AMP + diphosphate + H(+). The catalysed reaction is tRNA(Sec) + L-serine + ATP = L-seryl-tRNA(Sec) + AMP + diphosphate + H(+). Its pathway is aminoacyl-tRNA biosynthesis; selenocysteinyl-tRNA(Sec) biosynthesis; L-seryl-tRNA(Sec) from L-serine and tRNA(Sec): step 1/1. Functionally, catalyzes the attachment of serine to tRNA(Ser). Is also able to aminoacylate tRNA(Sec) with serine, to form the misacylated tRNA L-seryl-tRNA(Sec), which will be further converted into selenocysteinyl-tRNA(Sec). The polypeptide is Serine--tRNA ligase (Onion yellows phytoplasma (strain OY-M)).